The chain runs to 579 residues: Acetolactate synthase (579 aa).

E61 contributes to the thiamine diphosphate binding site. Residues R163, 274-295 (HGTAYANFAVMELDFVIAVGVR), and 317-336 (DIDPAEVGKNRSTDVPIVGD) each bind FAD. The tract at residues 408–487 (QHQMWAGQFV…VKVIILNNGW (80 aa)) is thiamine pyrophosphate binding. 2 residues coordinate Mg(2+): D458 and N485.

This sequence belongs to the TPP enzyme family. It depends on Mg(2+) as a cofactor. Thiamine diphosphate serves as cofactor.

The catalysed reaction is 2 pyruvate + H(+) = (2S)-2-acetolactate + CO2. It functions in the pathway amino-acid biosynthesis; L-isoleucine biosynthesis; L-isoleucine from 2-oxobutanoate: step 1/4. Its pathway is amino-acid biosynthesis; L-valine biosynthesis; L-valine from pyruvate: step 1/4. The protein is Acetolactate synthase (ilvY) of Arthrospira platensis (Spirulina platensis).